Reading from the N-terminus, the 150-residue chain is Thyroid hormone-inducible hepatic protein (150 aa).

The segment at 83–104 (KVAGNETSEAENDAAETEEAEE) is disordered. At Ser90 the chain carries Phosphoserine. Positions 90–104 (SEAENDAAETEEAEE) are enriched in acidic residues.

It belongs to the SPOT14 family. In terms of assembly, homodimer. Heterodimer with MID1IP1. Interacts with THRB and PLAGL1. As to expression, mainly expressed in tissues that synthesize triglycerides.

The protein resides in the nucleus. It localises to the cytoplasm. Functionally, plays a role in the regulation of lipogenesis, especially in lactating mammary gland. Important for the biosynthesis of triglycerides with medium-length fatty acid chains. May modulate lipogenesis by interacting with MID1IP1 and preventing its interaction with ACACA. May function as transcriptional coactivator. May modulate the transcription factor activity of THRB. The sequence is that of Thyroid hormone-inducible hepatic protein (Thrsp) from Mus musculus (Mouse).